The sequence spans 157 residues: UPF0178 protein BH1374 (157 aa).

The protein belongs to the UPF0178 family.

The sequence is that of UPF0178 protein BH1374 from Halalkalibacterium halodurans (strain ATCC BAA-125 / DSM 18197 / FERM 7344 / JCM 9153 / C-125) (Bacillus halodurans).